Reading from the N-terminus, the 434-residue chain is Glutamate-1-semialdehyde 2,1-aminomutase (434 aa).

Lys266 carries the post-translational modification N6-(pyridoxal phosphate)lysine.

The protein belongs to the class-III pyridoxal-phosphate-dependent aminotransferase family. HemL subfamily. In terms of assembly, homodimer. Requires pyridoxal 5'-phosphate as cofactor.

It localises to the cytoplasm. It catalyses the reaction (S)-4-amino-5-oxopentanoate = 5-aminolevulinate. Its pathway is porphyrin-containing compound metabolism; protoporphyrin-IX biosynthesis; 5-aminolevulinate from L-glutamyl-tRNA(Glu): step 2/2. This chain is Glutamate-1-semialdehyde 2,1-aminomutase, found in Fusobacterium nucleatum subsp. nucleatum (strain ATCC 25586 / DSM 15643 / BCRC 10681 / CIP 101130 / JCM 8532 / KCTC 2640 / LMG 13131 / VPI 4355).